The following is a 1321-amino-acid chain: C-Jun-amino-terminal kinase-interacting protein 4 (1321 aa).

Met1 is modified (N-acetylmethionine). In terms of domain architecture, RH1 spans 7–95 (VVYQEEPGGS…ITQYEREKAL (89 aa)). Positions 66–166 (AQDQEHQVEL…NALHQRHTEM (101 aa)) form a coiled coil. Phosphoserine is present on residues Ser109, Ser183, Ser185, Ser194, and Ser203. Residues 203 to 308 (SLGIFPLPAG…EGFVKGTDTS (106 aa)) form a disordered region. Thr217 carries the phosphothreonine modification. Polar residues predominate over residues 236–248 (ELSQPRSHTSLKV). Residues Ser238, Ser251, Ser265, Ser268, and Ser272 each carry the phosphoserine modification. Positions 266–285 (DISQGGSKATTPASTANSDV) are enriched in polar residues. At Thr292 the chain carries Phosphothreonine. Phosphoserine is present on residues Ser311, Ser329, Ser332, and Ser347. Residues 322-332 (AQETRNVSTES) show a composition bias toward polar residues. Residues 322-341 (AQETRNVSTESGENEEKSEV) are disordered. Phosphothreonine is present on residues Thr348, Thr365, and Thr418. Positions 408-534 (REVENLILEN…LQEAVRWTEM (127 aa)) form a coiled coil. A compositionally biased stretch (basic and acidic residues) spans 473-489 (LRKARAEAEDARQKAKD). Disordered stretches follow at residues 473–500 (LRKA…TAQR) and 563–600 (SSNA…SQLP). The RH2 domain occupies 500-604 (RKRFTRVEMA…TLSQLPGDKS (105 aa)). Residue Thr586 is modified to Phosphothreonine. Residue Ser588 is modified to Phosphoserine. Residue Thr595 is modified to Phosphothreonine. Ser705, Ser728, Ser730, Ser732, and Ser733 each carry phosphoserine. The stretch at 724–758 (SKQRSASQSSLDKLDQELKEQQKEFKNQEELSSQV) forms a coiled coil. The tract at residues 853–883 (TGAATSPSTNGASPVIEKPPEMETENSEVDE) is disordered. A compositionally biased stretch (polar residues) spans 855 to 864 (AATSPSTNGA). Positions 874–883 (METENSEVDE) are enriched in acidic residues. Ser1188 carries the phosphoserine modification. The interval 1239–1267 (PQSSSGGADLTADKAGSSAQEPSSQTPLK) is disordered. Residues 1255–1266 (SSAQEPSSQTPL) show a composition bias toward polar residues. Position 1264 is a phosphothreonine (Thr1264).

The protein belongs to the JIP scaffold family. In terms of assembly, homodimer. The homodimer interacts with ARF6, forming a heterotetramer. Homooligomer. Interacts with MAX, MAPK8, MAPK14, MAP3K3, MYC, and MAP2K4. Interacts with KNS2. Interaction with KNS2 is important in the formation of ternary complex with MAPK8. Interacts with PIP4P1. Interacts with PIKFYVE. Post-translationally, phosphorylated by MAPK8 and MAPK14. As to expression, highly expressed in brain, kidney, liver, heart.

It localises to the cytoplasm. Its subcellular location is the perinuclear region. It is found in the lysosome membrane. Its function is as follows. The JNK-interacting protein (JIP) group of scaffold proteins selectively mediates JNK signaling by aggregating specific components of the MAPK cascade to form a functional JNK signaling module. Regulates lysosomal positioning by acting as an adapter protein which links PIP4P1-positive lysosomes to the dynein-dynactin complex. Assists PIKFYVE selective functionality in microtubule-based endosome-to-TGN trafficking. The polypeptide is C-Jun-amino-terminal kinase-interacting protein 4 (Mus musculus (Mouse)).